We begin with the raw amino-acid sequence, 61 residues long: Probable tautomerase BA_5626/GBAA_5626/BAS5226 (61 aa).

Residue proline 2 is the Proton acceptor; via imino nitrogen of the active site.

This sequence belongs to the 4-oxalocrotonate tautomerase family.

This Bacillus anthracis protein is Probable tautomerase BA_5626/GBAA_5626/BAS5226.